Here is a 396-residue protein sequence, read N- to C-terminus: Tryptophan synthase beta chain (396 aa).

N6-(pyridoxal phosphate)lysine is present on K86.

The protein belongs to the TrpB family. In terms of assembly, tetramer of two alpha and two beta chains. Pyridoxal 5'-phosphate is required as a cofactor.

The enzyme catalyses (1S,2R)-1-C-(indol-3-yl)glycerol 3-phosphate + L-serine = D-glyceraldehyde 3-phosphate + L-tryptophan + H2O. It functions in the pathway amino-acid biosynthesis; L-tryptophan biosynthesis; L-tryptophan from chorismate: step 5/5. Its function is as follows. The beta subunit is responsible for the synthesis of L-tryptophan from indole and L-serine. The chain is Tryptophan synthase beta chain from Sodalis glossinidius (strain morsitans).